The following is a 578-amino-acid chain: Tetratricopeptide repeat protein ttc-39B (578 aa).

TPR repeat units follow at residues 297-330 (AIML…QDVY), 481-514 (CLYY…ESSI), and 522-554 (PNAT…YKSY).

In Caenorhabditis elegans, this protein is Tetratricopeptide repeat protein ttc-39B.